A 281-amino-acid polypeptide reads, in one-letter code: Pantothenate synthetase (281 aa).

Position 30 to 37 (30 to 37) interacts with ATP; that stretch reads MGYLHEGH. The active-site Proton donor is the His-37. Residue Gln-61 participates in (R)-pantoate binding. Gln-61 is a beta-alanine binding site. 147–150 contacts ATP; that stretch reads GEKD. Gln-153 lines the (R)-pantoate pocket. ATP-binding positions include Ile-176 and 184–187; that span reads KSSR.

It belongs to the pantothenate synthetase family. As to quaternary structure, homodimer.

It localises to the cytoplasm. The enzyme catalyses (R)-pantoate + beta-alanine + ATP = (R)-pantothenate + AMP + diphosphate + H(+). The protein operates within cofactor biosynthesis; (R)-pantothenate biosynthesis; (R)-pantothenate from (R)-pantoate and beta-alanine: step 1/1. Its function is as follows. Catalyzes the condensation of pantoate with beta-alanine in an ATP-dependent reaction via a pantoyl-adenylate intermediate. This is Pantothenate synthetase from Clostridium botulinum (strain Okra / Type B1).